The following is a 190-amino-acid chain: Superoxide dismutase [Fe] (190 aa).

4 residues coordinate Fe cation: histidine 27, histidine 75, aspartate 156, and histidine 160.

The protein belongs to the iron/manganese superoxide dismutase family. Homodimer. Fe cation is required as a cofactor.

It catalyses the reaction 2 superoxide + 2 H(+) = H2O2 + O2. In terms of biological role, destroys superoxide anion radicals which are normally produced within the cells and which are toxic to biological systems. This Entamoeba histolytica (strain ATCC 30459 / HM-1:IMSS / ABRM) protein is Superoxide dismutase [Fe] (SODB).